Consider the following 184-residue polypeptide: Ribulose bisphosphate carboxylase small subunit, chloroplastic 5 (184 aa).

The transit peptide at 1–43 (MAAAMMNKTIVVSKDGCARSSSIPKVATNKMGFASAVAMKKSR) directs the protein to the chloroplast.

Belongs to the RuBisCO small chain family. In terms of assembly, heterohexadecamer of 8 large and 8 small subunits.

The protein localises to the plastid. It localises to the chloroplast. RuBisCO catalyzes two reactions: the carboxylation of D-ribulose 1,5-bisphosphate, the primary event in carbon dioxide fixation, as well as the oxidative fragmentation of the pentose substrate. Both reactions occur simultaneously and in competition at the same active site. Although the small subunit is not catalytic it is essential for maximal activity. This is Ribulose bisphosphate carboxylase small subunit, chloroplastic 5 from Acetabularia peniculus (Green alga).